Reading from the N-terminus, the 514-residue chain is Na(+)/H(+) antiporter NhaB (514 aa).

The next 11 helical transmembrane spans lie at 21-41, 43-63, 88-108, 143-163, 203-223, 239-259, 304-324, 349-369, 390-410, 448-468, and 484-504; these read LAIV…SPFI, GWLL…CYPL, IMAN…IFFM, FLDA…FYGV, LMMH…VGEP, FFLR…LTCF, ALIA…VGLI, QESL…AVII, LALF…VFVA, ATPN…SPLI, and IVLS…ATIW.

It belongs to the NhaB Na(+)/H(+) (TC 2.A.34) antiporter family.

Its subcellular location is the cell inner membrane. It carries out the reaction 2 Na(+)(in) + 3 H(+)(out) = 2 Na(+)(out) + 3 H(+)(in). In terms of biological role, na(+)/H(+) antiporter that extrudes sodium in exchange for external protons. The polypeptide is Na(+)/H(+) antiporter NhaB (Haemophilus influenzae (strain ATCC 51907 / DSM 11121 / KW20 / Rd)).